Consider the following 368-residue polypeptide: Peptide chain release factor 2 (368 aa).

N5-methylglutamine is present on Gln-250.

Belongs to the prokaryotic/mitochondrial release factor family. In terms of processing, methylated by PrmC. Methylation increases the termination efficiency of RF2.

It localises to the cytoplasm. Its function is as follows. Peptide chain release factor 2 directs the termination of translation in response to the peptide chain termination codons UGA and UAA. In Mycolicibacterium smegmatis (strain ATCC 700084 / mc(2)155) (Mycobacterium smegmatis), this protein is Peptide chain release factor 2.